The chain runs to 485 residues: Putative E3 ubiquitin-protein ligase makorin-4 (485 aa).

A compositionally biased stretch (low complexity) spans 1–32 (MAEAAAPGTTVTTSGAGAAAAEAAETAEAVSP). The interval 1 to 63 (MAEAAAPGTT…GSDGSGGRGD (63 aa)) is disordered. Residues 45 to 63 (AGGGVGGSDGSDGSGGRGD) show a composition bias toward gly residues. 3 C3H1-type zinc fingers span residues 90-117 (WTKQ…HDLS), 124-146 (VCKY…HSKP), and 243-270 (ETKK…HGDL). A makorin-type Cys-His region spans residues 271–298 (CDMCGLQVLHPMDAAQRSQHIQACIEAH). The RING-type zinc-finger motif lies at 316–370 (CGICMEVVYEKANPNEHRFGILSNCNHTFCLKCIRKWRSAKEFESRIVKSCPQCR). The C3H1-type 4 zinc-finger motif lies at 399 to 428 (AMSNKACKYFDEGRGSCPFGENCFYKHMYP).

It carries out the reaction S-ubiquitinyl-[E2 ubiquitin-conjugating enzyme]-L-cysteine + [acceptor protein]-L-lysine = [E2 ubiquitin-conjugating enzyme]-L-cysteine + N(6)-ubiquitinyl-[acceptor protein]-L-lysine.. It participates in protein modification; protein ubiquitination. Functionally, may act as a E3 ubiquitin ligase catalyzing the covalent attachment of ubiquitin moieties onto substrate proteins. In Homo sapiens (Human), this protein is Putative E3 ubiquitin-protein ligase makorin-4 (MKRN4P).